Consider the following 175-residue polypeptide: FMN reductase (NADH) RutF (175 aa).

This sequence belongs to the non-flavoprotein flavin reductase family. RutF subfamily.

It carries out the reaction FMNH2 + NAD(+) = FMN + NADH + 2 H(+). Its function is as follows. Catalyzes the reduction of FMN to FMNH2 which is used to reduce pyrimidine by RutA via the Rut pathway. This is FMN reductase (NADH) RutF from Serratia proteamaculans (strain 568).